Reading from the N-terminus, the 95-residue chain is Pyrimidine/purine nucleoside phosphorylase (95 aa).

This sequence belongs to the nucleoside phosphorylase PpnP family.

It catalyses the reaction a purine D-ribonucleoside + phosphate = a purine nucleobase + alpha-D-ribose 1-phosphate. The catalysed reaction is adenosine + phosphate = alpha-D-ribose 1-phosphate + adenine. It carries out the reaction cytidine + phosphate = cytosine + alpha-D-ribose 1-phosphate. The enzyme catalyses guanosine + phosphate = alpha-D-ribose 1-phosphate + guanine. It catalyses the reaction inosine + phosphate = alpha-D-ribose 1-phosphate + hypoxanthine. The catalysed reaction is thymidine + phosphate = 2-deoxy-alpha-D-ribose 1-phosphate + thymine. It carries out the reaction uridine + phosphate = alpha-D-ribose 1-phosphate + uracil. The enzyme catalyses xanthosine + phosphate = alpha-D-ribose 1-phosphate + xanthine. Functionally, catalyzes the phosphorolysis of diverse nucleosides, yielding D-ribose 1-phosphate and the respective free bases. Can use uridine, adenosine, guanosine, cytidine, thymidine, inosine and xanthosine as substrates. Also catalyzes the reverse reactions. This Enterobacter sp. (strain 638) protein is Pyrimidine/purine nucleoside phosphorylase.